Consider the following 104-residue polypeptide: Nucleoid-associated protein DICTH_1981 (104 aa).

A disordered region spans residues 85 to 104 (KSAEKMGSLADGLPLPPGLF).

This sequence belongs to the YbaB/EbfC family. Homodimer.

Its subcellular location is the cytoplasm. It localises to the nucleoid. In terms of biological role, binds to DNA and alters its conformation. May be involved in regulation of gene expression, nucleoid organization and DNA protection. This is Nucleoid-associated protein DICTH_1981 from Dictyoglomus thermophilum (strain ATCC 35947 / DSM 3960 / H-6-12).